Reading from the N-terminus, the 360-residue chain is Phospho-N-acetylmuramoyl-pentapeptide-transferase (360 aa).

A run of 10 helical transmembrane segments spans residues 27 to 47, 72 to 92, 94 to 114, 132 to 152, 168 to 188, 199 to 219, 236 to 256, 263 to 283, 288 to 308, and 338 to 358; these read IVSL…LIGW, PTMG…MWAY, SNPY…VGFV, WKYF…YCIG, IMPQ…VGTS, GLAI…AWAT, AGEL…FLWF, VFMG…IAVL, FLLV…ILQV, and VIVR…ATLK.

The protein belongs to the glycosyltransferase 4 family. MraY subfamily. The cofactor is Mg(2+).

It localises to the cell inner membrane. It catalyses the reaction UDP-N-acetyl-alpha-D-muramoyl-L-alanyl-gamma-D-glutamyl-meso-2,6-diaminopimeloyl-D-alanyl-D-alanine + di-trans,octa-cis-undecaprenyl phosphate = di-trans,octa-cis-undecaprenyl diphospho-N-acetyl-alpha-D-muramoyl-L-alanyl-D-glutamyl-meso-2,6-diaminopimeloyl-D-alanyl-D-alanine + UMP. Its pathway is cell wall biogenesis; peptidoglycan biosynthesis. In terms of biological role, catalyzes the initial step of the lipid cycle reactions in the biosynthesis of the cell wall peptidoglycan: transfers peptidoglycan precursor phospho-MurNAc-pentapeptide from UDP-MurNAc-pentapeptide onto the lipid carrier undecaprenyl phosphate, yielding undecaprenyl-pyrophosphoryl-MurNAc-pentapeptide, known as lipid I. This is Phospho-N-acetylmuramoyl-pentapeptide-transferase from Edwardsiella ictaluri (strain 93-146).